A 941-amino-acid chain; its full sequence is Bifunctional glutamine synthetase adenylyltransferase/adenylyl-removing enzyme (941 aa).

The segment at 1-437 (MSIPTASLSP…TAEFAELLAP (437 aa)) is adenylyl removase. The adenylyl transferase stretch occupies residues 444 to 941 (PDTLADYWRA…FPLGKDEAAL (498 aa)).

It belongs to the GlnE family. It depends on Mg(2+) as a cofactor.

The enzyme catalyses [glutamine synthetase]-O(4)-(5'-adenylyl)-L-tyrosine + phosphate = [glutamine synthetase]-L-tyrosine + ADP. It catalyses the reaction [glutamine synthetase]-L-tyrosine + ATP = [glutamine synthetase]-O(4)-(5'-adenylyl)-L-tyrosine + diphosphate. Its function is as follows. Involved in the regulation of glutamine synthetase GlnA, a key enzyme in the process to assimilate ammonia. When cellular nitrogen levels are high, the C-terminal adenylyl transferase (AT) inactivates GlnA by covalent transfer of an adenylyl group from ATP to specific tyrosine residue of GlnA, thus reducing its activity. Conversely, when nitrogen levels are low, the N-terminal adenylyl removase (AR) activates GlnA by removing the adenylyl group by phosphorolysis, increasing its activity. The regulatory region of GlnE binds the signal transduction protein PII (GlnB) which indicates the nitrogen status of the cell. The polypeptide is Bifunctional glutamine synthetase adenylyltransferase/adenylyl-removing enzyme (Xanthomonas oryzae pv. oryzae (strain MAFF 311018)).